The primary structure comprises 482 residues: UDP-N-acetylmuramate--L-alanine ligase (482 aa).

Position 115–121 (115–121) interacts with ATP; that stretch reads GTHGKTT.

Belongs to the MurCDEF family.

It is found in the cytoplasm. It carries out the reaction UDP-N-acetyl-alpha-D-muramate + L-alanine + ATP = UDP-N-acetyl-alpha-D-muramoyl-L-alanine + ADP + phosphate + H(+). The protein operates within cell wall biogenesis; peptidoglycan biosynthesis. Cell wall formation. The protein is UDP-N-acetylmuramate--L-alanine ligase of Rhodospirillum centenum (strain ATCC 51521 / SW).